The primary structure comprises 278 residues: 4-deoxy-L-threo-5-hexosulose-uronate ketol-isomerase (278 aa).

Zn(2+) is bound by residues His-196, His-198, Glu-203, and His-245.

The protein belongs to the KduI family. Requires Zn(2+) as cofactor.

The enzyme catalyses 5-dehydro-4-deoxy-D-glucuronate = 3-deoxy-D-glycero-2,5-hexodiulosonate. The protein operates within glycan metabolism; pectin degradation; 2-dehydro-3-deoxy-D-gluconate from pectin: step 4/5. Functionally, catalyzes the isomerization of 5-dehydro-4-deoxy-D-glucuronate to 3-deoxy-D-glycero-2,5-hexodiulosonate. The sequence is that of 4-deoxy-L-threo-5-hexosulose-uronate ketol-isomerase from Edwardsiella ictaluri (strain 93-146).